The primary structure comprises 180 residues: ATP synthase subunit b (180 aa).

Residues 26-46 (IPLMLATLAALVISIFFLTYF) form a helical membrane-spanning segment.

It belongs to the ATPase B chain family. In terms of assembly, F-type ATPases have 2 components, F(1) - the catalytic core - and F(0) - the membrane proton channel. F(1) has five subunits: alpha(3), beta(3), gamma(1), delta(1), epsilon(1). F(0) has three main subunits: a(1), b(2) and c(10-14). The alpha and beta chains form an alternating ring which encloses part of the gamma chain. F(1) is attached to F(0) by a central stalk formed by the gamma and epsilon chains, while a peripheral stalk is formed by the delta and b chains.

It is found in the cell membrane. Its function is as follows. F(1)F(0) ATP synthase produces ATP from ADP in the presence of a proton or sodium gradient. F-type ATPases consist of two structural domains, F(1) containing the extramembraneous catalytic core and F(0) containing the membrane proton channel, linked together by a central stalk and a peripheral stalk. During catalysis, ATP synthesis in the catalytic domain of F(1) is coupled via a rotary mechanism of the central stalk subunits to proton translocation. In terms of biological role, component of the F(0) channel, it forms part of the peripheral stalk, linking F(1) to F(0). The chain is ATP synthase subunit b from Mycoplasmopsis pulmonis (strain UAB CTIP) (Mycoplasma pulmonis).